The chain runs to 117 residues: Peptidyl-tRNA hydrolase (117 aa).

The protein belongs to the PTH2 family.

It is found in the cytoplasm. The enzyme catalyses an N-acyl-L-alpha-aminoacyl-tRNA + H2O = an N-acyl-L-amino acid + a tRNA + H(+). The natural substrate for this enzyme may be peptidyl-tRNAs which drop off the ribosome during protein synthesis. The polypeptide is Peptidyl-tRNA hydrolase (Thermoplasma acidophilum (strain ATCC 25905 / DSM 1728 / JCM 9062 / NBRC 15155 / AMRC-C165)).